Reading from the N-terminus, the 298-residue chain is Bifunctional protein FolD (298 aa).

NADP(+)-binding positions include 165-167 (GRS), S190, and I231.

This sequence belongs to the tetrahydrofolate dehydrogenase/cyclohydrolase family. As to quaternary structure, homodimer.

It carries out the reaction (6R)-5,10-methylene-5,6,7,8-tetrahydrofolate + NADP(+) = (6R)-5,10-methenyltetrahydrofolate + NADPH. The enzyme catalyses (6R)-5,10-methenyltetrahydrofolate + H2O = (6R)-10-formyltetrahydrofolate + H(+). The protein operates within one-carbon metabolism; tetrahydrofolate interconversion. Catalyzes the oxidation of 5,10-methylenetetrahydrofolate to 5,10-methenyltetrahydrofolate and then the hydrolysis of 5,10-methenyltetrahydrofolate to 10-formyltetrahydrofolate. The sequence is that of Bifunctional protein FolD from Prochlorococcus marinus (strain AS9601).